The following is a 506-amino-acid chain: Aldehyde dehydrogenase (506 aa).

218–224 (GFGLEAG) contributes to the NAD(+) binding site. Residues Glu-262 and Cys-301 contribute to the active site.

Belongs to the aldehyde dehydrogenase family.

It carries out the reaction an aldehyde + NAD(+) + H2O = a carboxylate + NADH + 2 H(+). The protein is Aldehyde dehydrogenase of Rhodospirillum rubrum (strain ATCC 11170 / ATH 1.1.1 / DSM 467 / LMG 4362 / NCIMB 8255 / S1).